The primary structure comprises 200 residues: Lipopolysaccharide core heptose(II)-phosphate phosphatase (200 aa).

Positions Met1–Ala25 are cleaved as a signal peptide.

This sequence belongs to the phosphoglycerate mutase family. Ais subfamily.

The protein localises to the periplasm. It functions in the pathway bacterial outer membrane biogenesis; lipopolysaccharide metabolism. Functionally, catalyzes the dephosphorylation of heptose(II) of the outer membrane lipopolysaccharide core. In Escherichia coli O6:K15:H31 (strain 536 / UPEC), this protein is Lipopolysaccharide core heptose(II)-phosphate phosphatase.